Reading from the N-terminus, the 566-residue chain is Probable cytochrome P450 519D1 (566 aa).

The chain crosses the membrane as a helical span at residues 1–21; that stretch reads MNVFVLTFFICIIYLLFDLIK. The interval 471 to 491 is disordered; the sequence is FNNNNNNNNNNNNNNSNNKHK. Positions 472–487 are enriched in low complexity; that stretch reads NNNNNNNNNNNNNNSN. Heme is bound at residue cysteine 510.

It belongs to the cytochrome P450 family. The cofactor is heme.

The protein localises to the membrane. This Dictyostelium discoideum (Social amoeba) protein is Probable cytochrome P450 519D1 (cyp519D1).